The chain runs to 238 residues: Sarcospan (238 aa).

The disordered stretch occupies residues 1–33 (MGKDRQPRGQQRQGDAAGPDDPGPKKGAGTREQ). The Extracellular segment spans residues 1 to 48 (MGKDRQPRGQQRQGDAAGPDDPGPKKGAGTREQRGEEEAQTCCGCRFP). Low complexity predominate over residues 8–20 (RGQQRQGDAAGPD). A helical membrane pass occupies residues 49–69 (LLLALLQLALGVAVTVVGFLM). Over 70–81 (ASVSSSLLVRAT) the chain is Cytoplasmic. Residues 82–102 (PYWAGIIVCVVAYLGLFMLCV) traverse the membrane as a helical segment. Topologically, residues 103–117 (SYQVDERTCIQFSMK) are cytoplasmic. Residues 118 to 138 (LLYFVLSALGLVVCVLAVAFA) form a helical membrane-spanning segment. Residues 139–188 (AHHYSLLTHLTCENAPDSCQCKLPSSEPLSRTFVYRDVTDCTSITGTFQV) lie on the Extracellular side of the membrane. Residues 189 to 209 (FLLVQMVLNLVCGLVCLVACF) form a helical membrane-spanning segment. Residues 210-238 (VMWKHRYQVFYVGVRMCPLSASEGQQQKV) are Cytoplasmic-facing.

It is found in the cell membrane. Its subcellular location is the sarcolemma. The protein localises to the postsynaptic cell membrane. Functionally, component of the dystrophin-glycoprotein complex (DGC), a complex that spans the muscle plasma membrane and forms a link between the F-actin cytoskeleton and the extracellular matrix. Preferentially associates with the sarcoglycan subcomplex of the DGC. The sequence is that of Sarcospan (SSPN) from Oryctolagus cuniculus (Rabbit).